We begin with the raw amino-acid sequence, 452 residues long: Exodeoxyribonuclease 7 large subunit (452 aa).

It belongs to the XseA family. In terms of assembly, heterooligomer composed of large and small subunits.

Its subcellular location is the cytoplasm. It carries out the reaction Exonucleolytic cleavage in either 5'- to 3'- or 3'- to 5'-direction to yield nucleoside 5'-phosphates.. In terms of biological role, bidirectionally degrades single-stranded DNA into large acid-insoluble oligonucleotides, which are then degraded further into small acid-soluble oligonucleotides. The protein is Exodeoxyribonuclease 7 large subunit of Bacillus cereus (strain G9842).